We begin with the raw amino-acid sequence, 400 residues long: 1-deoxy-D-xylulose 5-phosphate reductoisomerase (400 aa).

Residues Thr10, Gly11, Ser12, Ile13, Gly36, Asn38, and Asn124 each contribute to the NADPH site. Position 125 (Lys125) interacts with 1-deoxy-D-xylulose 5-phosphate. Glu126 serves as a coordination point for NADPH. Asp150 is a Mn(2+) binding site. Residues Ser151, Glu152, Ser186, and His209 each contribute to the 1-deoxy-D-xylulose 5-phosphate site. Glu152 serves as a coordination point for Mn(2+). Gly215 lines the NADPH pocket. Positions 222, 227, 228, and 231 each coordinate 1-deoxy-D-xylulose 5-phosphate. Glu231 is a Mn(2+) binding site.

Belongs to the DXR family. Mg(2+) serves as cofactor. Requires Mn(2+) as cofactor.

It catalyses the reaction 2-C-methyl-D-erythritol 4-phosphate + NADP(+) = 1-deoxy-D-xylulose 5-phosphate + NADPH + H(+). It participates in isoprenoid biosynthesis; isopentenyl diphosphate biosynthesis via DXP pathway; isopentenyl diphosphate from 1-deoxy-D-xylulose 5-phosphate: step 1/6. Catalyzes the NADPH-dependent rearrangement and reduction of 1-deoxy-D-xylulose-5-phosphate (DXP) to 2-C-methyl-D-erythritol 4-phosphate (MEP). In Aliivibrio fischeri (strain MJ11) (Vibrio fischeri), this protein is 1-deoxy-D-xylulose 5-phosphate reductoisomerase.